The following is a 494-amino-acid chain: Anthranilate synthase component 1 (494 aa).

Residues S52 and 274–276 (PYM) each bind L-tryptophan. 309 to 310 (GT) is a chorismate binding site. E336 is a Mg(2+) binding site. Residues Y424, R444, 458 to 460 (GAG), and G460 contribute to the chorismate site. E473 provides a ligand contact to Mg(2+).

The protein belongs to the anthranilate synthase component I family. Heterotetramer consisting of two non-identical subunits: a beta subunit (TrpG) and a large alpha subunit (TrpE). Mg(2+) is required as a cofactor.

It carries out the reaction chorismate + L-glutamine = anthranilate + pyruvate + L-glutamate + H(+). The protein operates within amino-acid biosynthesis; L-tryptophan biosynthesis; L-tryptophan from chorismate: step 1/5. Its activity is regulated as follows. Feedback inhibited by tryptophan. Part of a heterotetrameric complex that catalyzes the two-step biosynthesis of anthranilate, an intermediate in the biosynthesis of L-tryptophan. In the first step, the glutamine-binding beta subunit (TrpG) of anthranilate synthase (AS) provides the glutamine amidotransferase activity which generates ammonia as a substrate that, along with chorismate, is used in the second step, catalyzed by the large alpha subunit of AS (TrpE) to produce anthranilate. In the absence of TrpG, TrpE can synthesize anthranilate directly from chorismate and high concentrations of ammonia. This is Anthranilate synthase component 1 (trpE) from Aquifex aeolicus (strain VF5).